The following is a 976-amino-acid chain: Synaptonemal complex protein 1 (976 aa).

Positions 101-111 (GLSRVYSKLYK) match the Mediates head to head self-assembly of N-terminal ends motif. The Nuclear localization signal signature appears at 117–120 (KKWK). Residues 206-362 (ETRQVYMDLN…CQLTEEKETQ (157 aa)) form an interaction with SYCE3 region. Coiled coils occupy residues 211-316 (YMDL…SIEK), 391-439 (LRTE…LKKV), 499-685 (VKDL…VEKA), and 739-798 (EQEQ…KTQT). The interval 676–770 (ENLLEEVEKA…LSVKKQLEIE (95 aa)) is required for pH-induced assembly of C-terminal ends into antiparallel tetramers. The Nuclear localization signal signature appears at 679–682 (LEEV). The DNA-binding stretch occupies residues 784 to 976 (NTATLKEKKD…KLKEAEKLFV (193 aa)). A Nuclear localization signal motif is present at residues 880-883 (KKRK).

Structural component of synaptonemal complexes. Homotetramer that consists of an N-terminal four-helical bundle that bifurcates into two elongated C-terminal dimeric coiled coils. This tetrameric building block potentially self-assembles into a supramolecular zipper-like lattice to mediate meiotic chromosome synapsis. Self-assembly is likely initiated by local proton density at chromosome axis, which is predicted to trigger antiparallel back to back assembly of adjacent C-terminal ends into tetrameric structures that anchor to chromosomal DNA. Then the N-terminal ends are predicted to undergo cooperative antiparallel head to head assembly at the midline of synaptonemal complexes central element to form a zipper-like lattice between properly aligned homologous chromosomes. The nascent synapsis generated by SYCP1 is stabilized through interaction with central element proteins SYCE1 and SYCE2. Interacts (via tetrameric core) with SYCE3; the interaction remodels SYCP1 homotetramers to 2:1 heterotrimers with SYCE3. SYCP1/SYCE3 heterotrimers form lattice assemblies as part of the mature synaptonemal complex via both lateral and head-to-head interactions. Forms a complex with EWSR1, PRDM9, SYCP3 and REC8; complex formation is dependent of phosphorylated form of REC8 and requires PRDM9 bound to hotspot DNA; EWSR1 joins PRDM9 with the chromosomal axis through REC8. Interacts with SPO16. Testis.

It is found in the nucleus. Its subcellular location is the chromosome. It localises to the centromere. Functionally, major component of the transverse filaments of synaptonemal complexes, formed between homologous chromosomes during meiotic prophase. Required for normal assembly of the central element of the synaptonemal complexes. Required for normal centromere pairing during meiosis. Required for normal meiotic chromosome synapsis during oocyte and spermatocyte development and for normal male and female fertility. This chain is Synaptonemal complex protein 1, found in Homo sapiens (Human).